The sequence spans 202 residues: Orotate phosphoribosyltransferase (202 aa).

Residues lysine 93 and 113-121 (EDIITTGGS) contribute to the 5-phospho-alpha-D-ribose 1-diphosphate site. Residues threonine 117 and arginine 145 each contribute to the orotate site.

The protein belongs to the purine/pyrimidine phosphoribosyltransferase family. PyrE subfamily. As to quaternary structure, homodimer. Requires Mg(2+) as cofactor.

It catalyses the reaction orotidine 5'-phosphate + diphosphate = orotate + 5-phospho-alpha-D-ribose 1-diphosphate. It functions in the pathway pyrimidine metabolism; UMP biosynthesis via de novo pathway; UMP from orotate: step 1/2. In terms of biological role, catalyzes the transfer of a ribosyl phosphate group from 5-phosphoribose 1-diphosphate to orotate, leading to the formation of orotidine monophosphate (OMP). The sequence is that of Orotate phosphoribosyltransferase from Campylobacter fetus subsp. fetus (strain 82-40).